The following is a 364-amino-acid chain: Methylthioribose-1-phosphate isomerase (364 aa).

Substrate-binding positions include R53 to A55, R90, and Q203. The active-site Proton donor is D244. N254–K255 is a binding site for substrate.

The protein belongs to the eIF-2B alpha/beta/delta subunits family. MtnA subfamily.

The catalysed reaction is 5-(methylsulfanyl)-alpha-D-ribose 1-phosphate = 5-(methylsulfanyl)-D-ribulose 1-phosphate. Its pathway is amino-acid biosynthesis; L-methionine biosynthesis via salvage pathway; L-methionine from S-methyl-5-thio-alpha-D-ribose 1-phosphate: step 1/6. In terms of biological role, catalyzes the interconversion of methylthioribose-1-phosphate (MTR-1-P) into methylthioribulose-1-phosphate (MTRu-1-P). In Sinorhizobium medicae (strain WSM419) (Ensifer medicae), this protein is Methylthioribose-1-phosphate isomerase.